Here is a 453-residue protein sequence, read N- to C-terminus: Aspartate aminotransferase, chloroplastic (453 aa).

A chloroplast-targeting transit peptide spans 1-44; sequence MASLMLSLGSTSLLPREINKDKLKLGTSASNPFLKAKSFSRVTM. Residues Gly85, Trp181, and Asn234 each coordinate L-aspartate. Lys298 bears the N6-(pyridoxal phosphate)lysine mark. An L-aspartate-binding site is contributed by Arg427.

Belongs to the class-I pyridoxal-phosphate-dependent aminotransferase family. Homodimer. It depends on pyridoxal 5'-phosphate as a cofactor.

The protein localises to the plastid. It is found in the chloroplast. It localises to the amyloplast. It catalyses the reaction L-aspartate + 2-oxoglutarate = oxaloacetate + L-glutamate. Its function is as follows. Amino acid aminotransferase important for the metabolism of amino acids and Krebs-cycle related organic acids. No activity with D-Asp or D-Ala as amino donors. In plants, it is involved in nitrogen metabolism and in aspects of carbon and energy metabolism. This chain is Aspartate aminotransferase, chloroplastic (ASP5), found in Arabidopsis thaliana (Mouse-ear cress).